The sequence spans 86 residues: Small ribosomal subunit protein bS16 (86 aa).

This sequence belongs to the bacterial ribosomal protein bS16 family.

In Bordetella petrii (strain ATCC BAA-461 / DSM 12804 / CCUG 43448), this protein is Small ribosomal subunit protein bS16.